The sequence spans 338 residues: Heat-inducible transcription repressor HrcA (338 aa).

The protein belongs to the HrcA family.

Functionally, negative regulator of class I heat shock genes (grpE-dnaK-dnaJ and groELS operons). Prevents heat-shock induction of these operons. The sequence is that of Heat-inducible transcription repressor HrcA from Bacillus cereus (strain 03BB102).